The sequence spans 98 residues: Citrate lyase acyl carrier protein (98 aa).

An O-(phosphoribosyl dephospho-coenzyme A)serine modification is found at serine 14.

Belongs to the CitD family. As to quaternary structure, oligomer with a subunit composition of (alpha,beta,gamma)6.

It localises to the cytoplasm. Functionally, covalent carrier of the coenzyme of citrate lyase. This chain is Citrate lyase acyl carrier protein, found in Salmonella arizonae (strain ATCC BAA-731 / CDC346-86 / RSK2980).